Here is a 360-residue protein sequence, read N- to C-terminus: Histidinol-phosphate aminotransferase (360 aa).

Lys-223 carries the N6-(pyridoxal phosphate)lysine modification.

This sequence belongs to the class-II pyridoxal-phosphate-dependent aminotransferase family. Histidinol-phosphate aminotransferase subfamily. In terms of assembly, homodimer. Pyridoxal 5'-phosphate is required as a cofactor.

The catalysed reaction is L-histidinol phosphate + 2-oxoglutarate = 3-(imidazol-4-yl)-2-oxopropyl phosphate + L-glutamate. It participates in amino-acid biosynthesis; L-histidine biosynthesis; L-histidine from 5-phospho-alpha-D-ribose 1-diphosphate: step 7/9. This is Histidinol-phosphate aminotransferase from Bacillus subtilis subsp. natto.